The chain runs to 219 residues: Ribose-5-phosphate isomerase A (219 aa).

Residues 28–31 (TGST), 81–84 (DGAD), and 94–97 (KGGG) each bind substrate. E103 serves as the catalytic Proton acceptor. Residue K121 coordinates substrate.

This sequence belongs to the ribose 5-phosphate isomerase family. In terms of assembly, homodimer.

The catalysed reaction is aldehydo-D-ribose 5-phosphate = D-ribulose 5-phosphate. The protein operates within carbohydrate degradation; pentose phosphate pathway; D-ribose 5-phosphate from D-ribulose 5-phosphate (non-oxidative stage): step 1/1. Its function is as follows. Catalyzes the reversible conversion of ribose-5-phosphate to ribulose 5-phosphate. In Erwinia tasmaniensis (strain DSM 17950 / CFBP 7177 / CIP 109463 / NCPPB 4357 / Et1/99), this protein is Ribose-5-phosphate isomerase A.